The sequence spans 150 residues: Flagellar assembly factor FliW (150 aa).

This sequence belongs to the FliW family. As to quaternary structure, interacts with translational regulator CsrA and flagellin(s).

It localises to the cytoplasm. In terms of biological role, acts as an anti-CsrA protein, binds CsrA and prevents it from repressing translation of its target genes, one of which is flagellin. Binds to flagellin and participates in the assembly of the flagellum. In Thermoanaerobacter pseudethanolicus (strain ATCC 33223 / 39E) (Clostridium thermohydrosulfuricum), this protein is Flagellar assembly factor FliW.